Reading from the N-terminus, the 252-residue chain is Bidirectional sugar transporter SWEET3b (252 aa).

Residues 1-8 (MVSNTIRV) lie on the Extracellular side of the membrane. A helical transmembrane segment spans residues 9–29 (AVGILGNAASMLLYAAPILTF). The MtN3/slv 1 domain maps to 10-98 (VGILGNAASM…SIYTWFAPRE (89 aa)). The Cytoplasmic portion of the chain corresponds to 30 to 43 (RRVIKKGSVEEFSC). Residues 44 to 64 (VPYILALFNCLLYTWYGLPVV) form a helical membrane-spanning segment. Topologically, residues 65 to 75 (SSGWENSTVSS) are extracellular. The N-linked (GlcNAc...) asparagine glycan is linked to Asn70. A helical membrane pass occupies residues 76–96 (INGLGILLEIAFISIYTWFAP). Over 97 to 105 (RERKKFVLR) the chain is Cytoplasmic. A helical transmembrane segment spans residues 106-126 (MVLPVLAFFALTAIFSSFLFH). The Extracellular portion of the chain corresponds to 127 to 132 (THGLRK). Residues 133–153 (VFVGSIGLVASISMYSSPMVA) traverse the membrane as a helical segment. One can recognise a MtN3/slv 2 domain in the interval 134–219 (FVGSIGLVAS…LYCIYRKSHK (86 aa)). Topologically, residues 154–167 (AKQVITTKSVEFMP) are cytoplasmic. A helical transmembrane segment spans residues 168-188 (FYLSLFSFLSSALWMIYGLLG). At 189 to 190 (KD) the chain is on the extracellular side. The chain crosses the membrane as a helical span at residues 191-211 (LFIASPNFIGCPMGILQLVLY). Residues 212–252 (CIYRKSHKEAEKLHDIDQENGLKVVTTHEKITGREPEAQRD) lie on the Cytoplasmic side of the membrane.

This sequence belongs to the SWEET sugar transporter family. As to quaternary structure, forms homooligomers and/or heterooligomers.

The protein localises to the cell membrane. Functionally, mediates both low-affinity uptake and efflux of sugar across the plasma membrane. In Oryza sativa subsp. japonica (Rice), this protein is Bidirectional sugar transporter SWEET3b (SWEET3B).